A 170-amino-acid polypeptide reads, in one-letter code: Protein BofC (170 aa).

Positions 1–30 (MKRFSTAYLLLGILCSAAVFLIGAPSRALG) are cleaved as a signal peptide.

As to quaternary structure, monomer.

It is found in the forespore intermembrane space. Functionally, inhibits the SpoIVB zymogen from undergoing autocatalytic activation by an unknown mechanism, and in this way plays a role in the sigma-K checkpoint of sporulation. This Bacillus subtilis (strain 168) protein is Protein BofC (bofC).